The sequence spans 502 residues: Betaine aldehyde dehydrogenase, chloroplastic (502 aa).

A chloroplast-targeting transit peptide spans 1 to 7; the sequence is MAFPIPA. 240-245 is an NAD(+) binding site; it reads GSSATG. The active-site Proton acceptor is E262. The active-site Nucleophile is C296.

Belongs to the aldehyde dehydrogenase family. As to quaternary structure, homodimer.

It is found in the plastid. It localises to the chloroplast. It carries out the reaction betaine aldehyde + NAD(+) + H2O = glycine betaine + NADH + 2 H(+). It functions in the pathway amine and polyamine biosynthesis; betaine biosynthesis via choline pathway; betaine from betaine aldehyde: step 1/1. In Atriplex hortensis (Mountain spinach), this protein is Betaine aldehyde dehydrogenase, chloroplastic.